We begin with the raw amino-acid sequence, 141 residues long: Nucleoside diphosphate kinase (141 aa).

The ATP site is built by K11, F59, R87, T93, R104, and N114. The active-site Pros-phosphohistidine intermediate is the H117.

Belongs to the NDK family. Homotetramer. It depends on Mg(2+) as a cofactor.

It is found in the cytoplasm. The catalysed reaction is a 2'-deoxyribonucleoside 5'-diphosphate + ATP = a 2'-deoxyribonucleoside 5'-triphosphate + ADP. The enzyme catalyses a ribonucleoside 5'-diphosphate + ATP = a ribonucleoside 5'-triphosphate + ADP. Major role in the synthesis of nucleoside triphosphates other than ATP. The ATP gamma phosphate is transferred to the NDP beta phosphate via a ping-pong mechanism, using a phosphorylated active-site intermediate. This Albidiferax ferrireducens (strain ATCC BAA-621 / DSM 15236 / T118) (Rhodoferax ferrireducens) protein is Nucleoside diphosphate kinase.